We begin with the raw amino-acid sequence, 336 residues long: F420-dependent glucose-6-phosphate dehydrogenase (336 aa).

Aspartate 39 contributes to the coenzyme F420-(gamma-Glu)n binding site. Histidine 40 serves as the catalytic Proton donor. Residues threonine 76 and 107–108 (TG) each bind coenzyme F420-(gamma-Glu)n. Glutamate 109 functions as the Proton acceptor in the catalytic mechanism. Coenzyme F420-(gamma-Glu)n contacts are provided by residues asparagine 112, 177 to 178 (GG), and 180 to 181 (QV). Residues threonine 195, lysine 198, lysine 259, and arginine 283 each coordinate substrate.

It belongs to the F420-dependent glucose-6-phosphate dehydrogenase family. As to quaternary structure, homodimer.

It catalyses the reaction oxidized coenzyme F420-(gamma-L-Glu)(n) + D-glucose 6-phosphate + H(+) = 6-phospho-D-glucono-1,5-lactone + reduced coenzyme F420-(gamma-L-Glu)(n). Functionally, catalyzes the coenzyme F420-dependent oxidation of glucose 6-phosphate (G6P) to 6-phosphogluconolactone. Appears to have a role in resistance to oxidative stress, via its consumption of G6P that serves as a source of reducing power to combat oxidative stress in mycobacteria. The chain is F420-dependent glucose-6-phosphate dehydrogenase from Mycolicibacterium gilvum (strain PYR-GCK) (Mycobacterium gilvum (strain PYR-GCK)).